The sequence spans 290 residues: Prepilin leader peptidase/N-methyltransferase (290 aa).

Residues leucine 14–isoleucine 34 traverse the membrane as a helical segment. Cysteine 74, cysteine 77, cysteine 99, and cysteine 102 together coordinate Zn(2+). The next 6 helical transmembrane spans lie at isoleucine 106–methionine 126, proline 130–isoleucine 150, leucine 161–leucine 181, valine 185–leucine 205, proline 232–leucine 252, and isoleucine 261–isoleucine 281.

The protein belongs to the peptidase A24 family. Zn(2+) is required as a cofactor.

Its subcellular location is the cell inner membrane. The catalysed reaction is Typically cleaves a -Gly-|-Phe- bond to release an N-terminal, basic peptide of 5-8 residues from type IV prepilin, and then N-methylates the new N-terminal amino group, the methyl donor being S-adenosyl-L-methionine.. Plays an essential role in type IV pili and type II pseudopili formation by proteolytically removing the leader sequence from substrate proteins and subsequently monomethylating the alpha-amino group of the newly exposed N-terminal phenylalanine. This is Prepilin leader peptidase/N-methyltransferase (tapD) from Aeromonas hydrophila.